Consider the following 85-residue polypeptide: Small ribosomal subunit protein eS21 (85 aa).

The protein belongs to the eukaryotic ribosomal protein eS21 family. In terms of assembly, component of the 40S small ribosomal subunit.

It localises to the cytoplasm. It is found in the cytosol. The protein localises to the rough endoplasmic reticulum. This Pectinaria gouldii (Trumpet worm) protein is Small ribosomal subunit protein eS21 (rps-21).